Reading from the N-terminus, the 350-residue chain is Nuclear pore complex-interacting protein family member A1 (350 aa).

The tract at residues 306–325 (KTPPECLLTPLPPSAPPSVD) is disordered.

It belongs to the NPIP family. As to quaternary structure, may associate with the nuclear pore complex. Widely expressed.

The protein resides in the nucleus. It is found in the nuclear pore complex. Its subcellular location is the nucleus membrane. This is Nuclear pore complex-interacting protein family member A1 (NPIPA1) from Homo sapiens (Human).